The following is a 304-amino-acid chain: Quinolinate synthase (304 aa).

Residues His24 and Ser41 each coordinate iminosuccinate. A [4Fe-4S] cluster-binding site is contributed by Cys86. Iminosuccinate contacts are provided by residues 112–114 and Ser129; that span reads YVN. Residue Cys171 coordinates [4Fe-4S] cluster. Residues 197-199 and Thr214 each bind iminosuccinate; that span reads HPE. Cys259 lines the [4Fe-4S] cluster pocket.

This sequence belongs to the quinolinate synthase family. Type 2 subfamily. The cofactor is [4Fe-4S] cluster.

It localises to the cytoplasm. The enzyme catalyses iminosuccinate + dihydroxyacetone phosphate = quinolinate + phosphate + 2 H2O + H(+). It functions in the pathway cofactor biosynthesis; NAD(+) biosynthesis; quinolinate from iminoaspartate: step 1/1. Catalyzes the condensation of iminoaspartate with dihydroxyacetone phosphate to form quinolinate. In Geotalea uraniireducens (strain Rf4) (Geobacter uraniireducens), this protein is Quinolinate synthase.